The primary structure comprises 234 residues: Eosinophil granule major basic protein 2 (234 aa).

Positions 1–15 (MKLLLLLALLVGAVS) are cleaved as a signal peptide. A propeptide spans 16–115 (TRHLNVDTSS…VKFEGSPGCK (100 aa)) (acidic). The disordered stretch occupies residues 26 to 96 (LQSLQGEESL…SSELDMGPED (71 aa)). A glycan (O-linked (Xyl...) (glycosaminoglycan) serine) is linked at S69. Residues 71-94 (SEDDPEEEEEEKEMESSSELDMGP) show a composition bias toward acidic residues. Residues 133 to 234 (SVCQRCFRGN…GVRRAFSCSY (102 aa)) enclose the C-type lectin domain. Intrachain disulfides connect C135–C232 and C209–C224.

In terms of processing, nitrated.

It is found in the cytoplasmic granule. MBP may play some important roles in the allergic reactions and inflammations, since MBP is capable of releasing histamine from mast cells and damaging the epithelial cells of bronchial tubes. Antiparasitic and antibiotic. This is Eosinophil granule major basic protein 2 (MBP2) from Cavia porcellus (Guinea pig).